Consider the following 261-residue polypeptide: Cytochrome c oxidase subunit 3 (261 aa).

Residues 1–15 (MTHQTHAYHMVNPSP) are Mitochondrial matrix-facing. Residues 16–34 (WPLTGALSALLMTFGLIMW) traverse the membrane as a helical segment. The Mitochondrial intermembrane segment spans residues 35–40 (FHFNST). The helical transmembrane segment at 41–66 (ALLMLGLTTNMLTMYQWWRDIIREST) threads the bilayer. Over 67 to 72 (FQGHHT) the chain is Mitochondrial matrix. A helical membrane pass occupies residues 73–105 (PVVQKGLRYGMILFIISEVLFFTGFFWAFYHSS). Over 106 to 128 (LAPTPELGGCWPPTGIHPLNPLE) the chain is Mitochondrial intermembrane. Residues 129-152 (VPLLNTSVLLASGVSITWAHHSLM) traverse the membrane as a helical segment. Residues 153–155 (EGH) are Mitochondrial matrix-facing. Residues 156–183 (RNHMLQALFITIALGVYFTLLQASEYYE) form a helical membrane-spanning segment. Topologically, residues 184 to 190 (APFTISD) are mitochondrial intermembrane. The chain crosses the membrane as a helical span at residues 191 to 223 (GVYGSTFFVATGFHGLHVIIGSTFLIVCFFRQL). Residues 224-232 (KFHFTSSHH) are Mitochondrial matrix-facing. A helical transmembrane segment spans residues 233-256 (FGFEAAAWYWHFVDVVWLFLYVSI). The Mitochondrial intermembrane segment spans residues 257–261 (YWWGS).

This sequence belongs to the cytochrome c oxidase subunit 3 family. In terms of assembly, component of the cytochrome c oxidase (complex IV, CIV), a multisubunit enzyme composed of 14 subunits. The complex is composed of a catalytic core of 3 subunits MT-CO1, MT-CO2 and MT-CO3, encoded in the mitochondrial DNA, and 11 supernumerary subunits COX4I, COX5A, COX5B, COX6A, COX6B, COX6C, COX7A, COX7B, COX7C, COX8 and NDUFA4, which are encoded in the nuclear genome. The complex exists as a monomer or a dimer and forms supercomplexes (SCs) in the inner mitochondrial membrane with NADH-ubiquinone oxidoreductase (complex I, CI) and ubiquinol-cytochrome c oxidoreductase (cytochrome b-c1 complex, complex III, CIII), resulting in different assemblies (supercomplex SCI(1)III(2)IV(1) and megacomplex MCI(2)III(2)IV(2)).

It is found in the mitochondrion inner membrane. It carries out the reaction 4 Fe(II)-[cytochrome c] + O2 + 8 H(+)(in) = 4 Fe(III)-[cytochrome c] + 2 H2O + 4 H(+)(out). Functionally, component of the cytochrome c oxidase, the last enzyme in the mitochondrial electron transport chain which drives oxidative phosphorylation. The respiratory chain contains 3 multisubunit complexes succinate dehydrogenase (complex II, CII), ubiquinol-cytochrome c oxidoreductase (cytochrome b-c1 complex, complex III, CIII) and cytochrome c oxidase (complex IV, CIV), that cooperate to transfer electrons derived from NADH and succinate to molecular oxygen, creating an electrochemical gradient over the inner membrane that drives transmembrane transport and the ATP synthase. Cytochrome c oxidase is the component of the respiratory chain that catalyzes the reduction of oxygen to water. Electrons originating from reduced cytochrome c in the intermembrane space (IMS) are transferred via the dinuclear copper A center (CU(A)) of subunit 2 and heme A of subunit 1 to the active site in subunit 1, a binuclear center (BNC) formed by heme A3 and copper B (CU(B)). The BNC reduces molecular oxygen to 2 water molecules using 4 electrons from cytochrome c in the IMS and 4 protons from the mitochondrial matrix. This is Cytochrome c oxidase subunit 3 (MT-CO3) from Tragelaphus oryx (Eland).